The following is a 591-amino-acid chain: Monoterpene synthase 8, chloroplastic (591 aa).

Residues 1-46 (MSLLLAPPSYFPFRGLRRSTAAKQPPCLRLVKCTADRQSPEAARRS) constitute a chloroplast transit peptide. D346, D350, and E497 together coordinate Mg(2+). The DDXXD motif signature appears at 346–350 (DDVYD).

It belongs to the terpene synthase family. Tpsa subfamily. Requires Mg(2+) as cofactor. Mn(2+) is required as a cofactor. In terms of tissue distribution, highly expressed in flowers, petals and sepals, but almost undetectable in vegetative organs.

Its subcellular location is the plastid. The protein localises to the chloroplast. It catalyses the reaction (2E)-geranyl diphosphate + H2O = (R)-linalool + diphosphate. It carries out the reaction (2E)-geranyl diphosphate + H2O = (S)-linalool + diphosphate. The catalysed reaction is (2E,6E)-farnesyl diphosphate = (S)-beta-bisabolene + diphosphate. The enzyme catalyses (2E,6E)-farnesyl diphosphate = (E,R)-alpha-bisabolene + diphosphate. It catalyses the reaction (2E,6E)-farnesyl diphosphate = (E)-beta-farnesene + diphosphate. It carries out the reaction (2E,6E)-farnesyl diphosphate = beta-sesquiphellandrene + diphosphate. The catalysed reaction is (2E,6E)-farnesyl diphosphate = (1S,5S,6R)-alpha-bergamotene + diphosphate. Its pathway is secondary metabolite biosynthesis; terpenoid biosynthesis. Functionally, sesquiterpene and monoterpene synthase involved in the biosynthesis of volatile compounds present in floral scent. Mediates the conversion of (2E)-geranyl diphosphate (GPP) into linalool, with trace levels of myrcene, limonene and (Z)-beta-ocimene. Also acts as a sesquiterpene synthase by catalyzing the conversion of farnesyl diphosphate (FPP) to alpha-bergamotene and beta-bisabolene and to minor products including alpha-curcumene, cis-alpha-bisabolene, beta-farnesene and beta-sesquiphellandrene, as well as seven other unidentified sesquiterpenes. The polypeptide is Monoterpene synthase 8, chloroplastic (Hedychium coronarium (White butterfly ginger-lily)).